A 244-amino-acid chain; its full sequence is Orotidine 5'-phosphate decarboxylase (244 aa).

Substrate-binding positions include D10, K32, 59 to 68, T122, R184, Q193, G213, and R214; that span reads DLKLHDIPNT. Catalysis depends on K61, which acts as the Proton donor.

It belongs to the OMP decarboxylase family. Type 1 subfamily. Homodimer.

It carries out the reaction orotidine 5'-phosphate + H(+) = UMP + CO2. It participates in pyrimidine metabolism; UMP biosynthesis via de novo pathway; UMP from orotate: step 2/2. Its function is as follows. Catalyzes the decarboxylation of orotidine 5'-monophosphate (OMP) to uridine 5'-monophosphate (UMP). This Bacillus caldolyticus protein is Orotidine 5'-phosphate decarboxylase.